The chain runs to 666 residues: N-acetylgalactosaminyltransferase 6 (666 aa).

Topologically, residues 1–11 (MRRPNLKWIVK) are cytoplasmic. A helical; Signal-anchor for type II membrane protein membrane pass occupies residues 12–31 (ASLLLLISLTLFVLITSWIS). Residues 32–666 (STPYTNKPVH…NYSQDLVLSL (635 aa)) are Lumenal-facing. The segment at 90–126 (EPVEEEVDNPHPADDEPQQQPQEELQMAAPADASVKK) is disordered. Residues 107-120 (QQQPQEELQMAAPA) are compositionally biased toward low complexity. The N-linked (GlcNAc...) asparagine glycan is linked to Asn-181. 5 disulfides stabilise this stretch: Cys-192–Cys-421, Cys-412–Cys-491, Cys-531–Cys-548, Cys-577–Cys-594, and Cys-621–Cys-636. Positions 201–311 (LPTVSVIIIF…YNWLPPLLEP (111 aa)) are catalytic subdomain A. Substrate contacts are provided by Asp-242 and Arg-272. Residue Asn-285 is glycosylated (N-linked (GlcNAc...) asparagine). Asp-295 is a Mn(2+) binding site. Ser-296 lines the substrate pocket. His-297 contacts Mn(2+). The tract at residues 367 to 429 (PFKSPIMAGG…PCSRIGHIYR (63 aa)) is catalytic subdomain B. Trp-398 provides a ligand contact to substrate. His-426 contacts Mn(2+). Arg-429 provides a ligand contact to substrate. The 131-residue stretch at 518-648 (AMGALQNVGN…DNRFQQWNFG (131 aa)) folds into the Ricin B-type lectin domain. N-linked (GlcNAc...) asparagine glycans are attached at residues Asn-651 and Asn-657.

This sequence belongs to the glycosyltransferase 2 family. GalNAc-T subfamily. It depends on Mn(2+) as a cofactor. In terms of tissue distribution, expressed during oogenesis, in the somatically derived follicle cells that surround the developing oocyte, which are involved in the maturation of the oocyte and construction of the egg shell, as well as playing a role in subsequent embryonic pattern formation. Expressed in the salivary glands from embryonic stage 12 onwards, becoming stronger at stage 13. During embryonic stages 12-13, also expressed in the posterior midgut and hindgut. During embryonic stages 14-15, expression continues in the hindgut. Expression is detected in the epidermis and antennomaxillary complex during embryonic stages 16-17. In third instar larvae, ubiquitously expressed in wing, eye-antennal, leg and haltere imaginal disks.

It is found in the golgi apparatus membrane. The enzyme catalyses L-seryl-[protein] + UDP-N-acetyl-alpha-D-galactosamine = a 3-O-[N-acetyl-alpha-D-galactosaminyl]-L-seryl-[protein] + UDP + H(+). It catalyses the reaction L-threonyl-[protein] + UDP-N-acetyl-alpha-D-galactosamine = a 3-O-[N-acetyl-alpha-D-galactosaminyl]-L-threonyl-[protein] + UDP + H(+). It participates in protein modification; protein glycosylation. In terms of biological role, glycopeptide transferase involved in O-linked oligosaccharide biosynthesis, which catalyzes the transfer of an N-acetyl-D-galactosamine residue to an already glycosylated peptide. In contrast to other proteins of the family, it does not act as a peptide transferase that transfers GalNAc onto serine or threonine residue on the protein receptor, but instead requires the prior addition of a GalNAc on a peptide before adding additional GalNAc moieties. Some peptide transferase activity is however not excluded, considering that its appropriate peptide substrate may remain unidentified. Prefers the diglycosylated Muc5AC-3/13 as substrate. Might have a role in protein O-glycosylation in the Golgi and thereby in establishing and/or maintaining a proper secretory apparatus structure. The sequence is that of N-acetylgalactosaminyltransferase 6 from Drosophila melanogaster (Fruit fly).